We begin with the raw amino-acid sequence, 463 residues long: Putative ankyrin repeat protein R579 (463 aa).

ANK repeat units follow at residues 124-154 (LKTDLMFYAVSKNVSIDVINFLIDMDCKCTI), 156-181 (SITRAIAEKKLDIAKIIIDHNPSENI), 242-271 (KEKNISSYVIQSNSLNVVKTFVEHGLQFNP), 273-299 (IYLWVNGNSESENIVRYIIELGIDYRP), 300-328 (HIDRLLKICITSGTFSHLEYLINLGVSQE), 329-355 (NINEAFLTAVSEDKFELIKYLIYMGAD), 356-385 (INYKNTIAASYTDNIDVLKYLIEKGADITT), and 387-416 (GSNDVINHAIGSHQSDFCRCLLENGATITL).

This is Putative ankyrin repeat protein R579 from Acanthamoeba polyphaga (Amoeba).